The sequence spans 194 residues: MTVGLFGGSFNPPHGGHALVAEIAIRRLKLDQLWWMVTPGNPLKDSRELASLSERLRLSEEVAEDPRIKVTALEAAFHVRYTADTLALIRNANPDVYFVWVMGADNLASFHRWQRWREIAQNFPIAIIDRPGSTLSYLSSRMAQTFSDSRLDERYAPVLARRMPPAWTFIHGPRSSLSSTALRKVQLKKAPSKK.

It belongs to the NadD family.

The catalysed reaction is nicotinate beta-D-ribonucleotide + ATP + H(+) = deamido-NAD(+) + diphosphate. The protein operates within cofactor biosynthesis; NAD(+) biosynthesis; deamido-NAD(+) from nicotinate D-ribonucleotide: step 1/1. Catalyzes the reversible adenylation of nicotinate mononucleotide (NaMN) to nicotinic acid adenine dinucleotide (NaAD). In Brucella suis biovar 1 (strain 1330), this protein is Probable nicotinate-nucleotide adenylyltransferase.